Reading from the N-terminus, the 288-residue chain is Release factor glutamine methyltransferase (288 aa).

Residues Asp-142 and Asn-186 each contribute to the S-adenosyl-L-methionine site. 186-189 (NPPY) serves as a coordination point for substrate.

Belongs to the protein N5-glutamine methyltransferase family. PrmC subfamily.

It catalyses the reaction L-glutaminyl-[peptide chain release factor] + S-adenosyl-L-methionine = N(5)-methyl-L-glutaminyl-[peptide chain release factor] + S-adenosyl-L-homocysteine + H(+). Its function is as follows. Methylates the class 1 translation termination release factors RF1/PrfA and RF2/PrfB on the glutamine residue of the universally conserved GGQ motif. This Mycobacterium leprae (strain TN) protein is Release factor glutamine methyltransferase.